Here is a 77-residue protein sequence, read N- to C-terminus: Sec-independent protein translocase protein TatA (77 aa).

Residues M1–G21 traverse the membrane as a helical segment. 2 stretches are compositionally biased toward basic and acidic residues: residues E47–A56 and T65–A77. Positions E47–A77 are disordered.

The protein belongs to the TatA/E family. As to quaternary structure, the Tat system comprises two distinct complexes: a TatABC complex, containing multiple copies of TatA, TatB and TatC subunits, and a separate TatA complex, containing only TatA subunits. Substrates initially bind to the TatABC complex, which probably triggers association of the separate TatA complex to form the active translocon.

It is found in the cell inner membrane. Part of the twin-arginine translocation (Tat) system that transports large folded proteins containing a characteristic twin-arginine motif in their signal peptide across membranes. TatA could form the protein-conducting channel of the Tat system. This chain is Sec-independent protein translocase protein TatA, found in Shewanella amazonensis (strain ATCC BAA-1098 / SB2B).